We begin with the raw amino-acid sequence, 1069 residues long: Degenerin-like protein del-10 (1069 aa).

Over 1 to 95 the chain is Cytoplasmic; that stretch reads MVRMAERLAE…LNAASPVTRG (95 aa). A helical transmembrane segment spans residues 96-116; it reads LWCMIIIAFVILVLVQCYSQI. Residues 117–830 lie on the Extracellular side of the membrane; that stretch reads KLYISEPVAT…FWSLACDIGG (714 aa). N-linked (GlcNAc...) asparagine glycans are attached at residues asparagine 216, asparagine 290, asparagine 374, asparagine 454, asparagine 539, asparagine 545, and asparagine 584. The chain crosses the membrane as a helical span at residues 831–851; sequence ALGLFLGASLLTIIEIVYLCI. Residues 852 to 1069 lie on the Cytoplasmic side of the membrane; it reads QYGLCGKRAR…EEDDDKHSYV (218 aa). 2 disordered regions span residues 898–948 and 960–1069; these read KKSQ…TLTP and RNSQ…HSYV. The span at 915–928 shows a compositional bias: basic and acidic residues; sequence GDKFRSRASSEESK. The segment covering 938-948 has biased composition (polar residues); it reads NDPSGNSTLTP. Residues 967–978 show a composition bias toward basic and acidic residues; it reads YHDDHHPEDHYY.

Belongs to the amiloride-sensitive sodium channel (TC 1.A.6) family.

Its subcellular location is the membrane. This Caenorhabditis elegans protein is Degenerin-like protein del-10.